The chain runs to 196 residues: MAEGSAVLRGSSNHKVTLVTGNDGKRREVQACLEGHVLVENVKLDLPEIQSDSVFEISRNKALTAYDIIKSPVLVEDTALCFDALGGLPGPYVKWFFERIGPTGLIKLLEGFDTRRAYATCVFTYCASPDVVLQFEGRCDGRIVEVPRGEGGFGWDSVFEPDEGCGQTYAEMQDEEKNRISPRAKALVALKAHFCL.

Position 20-25 (20-25) interacts with ITP; it reads TGNDGK. Glutamate 48 contributes to the Mg(2+) binding site. ITP contacts are provided by residues lysine 61, 77 to 78, lysine 94, 153 to 156, lysine 177, and 182 to 183; these read DT, FGWD, and PR.

The protein belongs to the HAM1 NTPase family. Homodimer. The cofactor is Mg(2+). Requires Mn(2+) as cofactor.

Its subcellular location is the cytoplasm. The enzyme catalyses ITP + H2O = IMP + diphosphate + H(+). It catalyses the reaction dITP + H2O = dIMP + diphosphate + H(+). It carries out the reaction XTP + H2O = XMP + diphosphate + H(+). Pyrophosphatase that hydrolyzes non-canonical purine nucleotides such as inosine triphosphate (ITP), deoxyinosine triphosphate (dITP) or xanthosine 5'-triphosphate (XTP) to their respective monophosphate derivatives. The enzyme does not distinguish between the deoxy- and ribose forms. Probably excludes non-canonical purines from RNA and DNA precursor pools, thus preventing their incorporation into RNA and DNA and avoiding chromosomal lesions. The protein is Inosine triphosphate pyrophosphatase 2 of Trypanosoma cruzi (strain CL Brener).